The chain runs to 741 residues: Phage T7 exclusion protein (741 aa).

Residues 27-334 (FGNIAENISR…NSLIFLYPGM (308 aa)) form the KAP NTPase domain.

Responsible for the exclusion of phage T7 by plasmid F. Growth of bacteriophage T7 is inhibited in cells of E.coli that carries the plasmid F. The sequence is that of Phage T7 exclusion protein (pifA) from Escherichia coli (strain K12).